A 232-amino-acid polypeptide reads, in one-letter code: Ubiquitin carboxyl-terminal hydrolase UCHL3 (232 aa).

The UCH catalytic domain occupies 6-225; it reads IWTPLESNPD…LRFSALAVIP (220 aa). The interval 10–14 is interaction with ubiquitin; that stretch reads LESNP. Cysteine 92 acts as the Nucleophile in catalysis. The tract at residues 151 to 159 is crossover loop which restricts access of large ubiquitin adducts to the active site; sequence QVENRDDIL. Residues 163–165 form an interaction with ubiquitin region; the sequence is THF. Histidine 164 acts as the Proton donor in catalysis.

Belongs to the peptidase C12 family.

It catalyses the reaction Thiol-dependent hydrolysis of ester, thioester, amide, peptide and isopeptide bonds formed by the C-terminal Gly of ubiquitin (a 76-residue protein attached to proteins as an intracellular targeting signal).. Functionally, thiol protease that recognizes and hydrolyzes a peptide bond at the C-terminal glycine of either ubiquitin or NEDD8. Essential for parasite blood stage survival. This is Ubiquitin carboxyl-terminal hydrolase UCHL3 from Plasmodium falciparum (isolate 3D7).